The chain runs to 1091 residues: MKLLYTDIRTSLTEILTREAEELVAAGKRVFYIAPNSLSFEKERAVLEYLSQQASFSITVTRFAQMARYLVLNDLPAKTTLDDIGLGLAFYKCLAELDPKDLRVYGAIKQDPQLIQQLIELYHEMTKSQMSFLDLENLTDEDKRADLLLIFEKVTAYLNQGQLAQESQLSHLIEAIENDKVSSDFNQIALVIDGFTRFSAEEERVVDLLHGKGVEIVIGAYASKKAYTSPFSEGNLYQASVKFLHHLASKYQTPAQDCSQTHEKMDSFDKASRLLESSYDFSELALDVDEKDRENLQIWSCLTQKEELELVARSIRQKLHENSDLSYKHFRILLGDVASYQLSLKTIFDQYQIPFYLGRSEAMAHHPLTQFVESILALKRYRFRQEDLINLLRTDLYTDLSQSDIDAFEQYIRYLGINGLPAFQQTFTKSHHGKFNLERLNVLRLRILAPLETLFASRKQKAEKLLQKWSVFLKEGAVTKQLQDLTTTLEAVEQERQAEVWKAFCHVLEQFATVFAGSQVSLEDFLALLHSGMSLSQYRTIPATVDTVLVQSYDLIAPLTADFVYAIGLTQDNLPKISQNTSLLTDEERQNLNQATEEGVQLLIASSENLKKNRYTMLSLVNSARKQLFLSAPSLFNESESKESAYLQELIHFGFRRREKRMNHKGLSKEDMGSYHSLLSSLVAYHQQGEMSDTEQDLTFVKVLSRVIGKKLDQQGLENPAIPTSPSSKTLAKDTLQALYPAKQEFYLSTSGLTEFYRNEYSYFLRYVLGLQEELRLHPDARSHGNFLHRIFERALQLPNEDSFDQRLEQAIQETSQEREFEAIYQESLEAQFTKEVLLDVARTTGHILRHNPAIETIKEEANFGGKDQAFIQLDNGRSVFVRGKVDRIDRLKANGAIGVVDYKSSLTQFQFPHFFNGLNSQLPTYLAALKREGEQNFFGAMYLEMAEPVQSLMAVKSLAGAVVEASKSMKYQGLFLEKESSYLGEFYNKNKANQLTDEEFQLLLDYNAYLYKKAAEKILAGRFAINPYTENGRSIAPYVQQHQAITGFEANYHLGQARFLEKLDLADGKRLVGEKLKQAWLEKIREELNR.

The protein belongs to the helicase family. AddB/RexB type 2 subfamily. Heterodimer of RexA (AddA) and RexB. The cofactor is Mg(2+).

Its function is as follows. Involved in DNA double-strand break repair. Is not involved in recombination during natural competence or in plasmid establishment. Functionally, the heterodimer acts as both an ATP-dependent DNA helicase and an ATP-dependent, dual-direction single-stranded exonuclease. Recognizes the chi site generating a DNA molecule suitable for the initiation of homologous recombination. This subunit has 5' -&gt; 3' nuclease activity but not helicase activity. The polypeptide is Exonuclease/helicase subunit RexB (Streptococcus pneumoniae serotype 4 (strain ATCC BAA-334 / TIGR4)).